An 835-amino-acid polypeptide reads, in one-letter code: U-box domain-containing protein 35 (835 aa).

Disordered stretches follow at residues 1–22 (MSRS…SRTV), 177–303 (VRPS…SSNR), and 410–457 (EKEK…LEGT). The segment covering 10 to 19 (LPPPPPPPPS) has biased composition (pro residues). The segment covering 195–218 (RTNSSSGSSGPTSDSSDVMSSAHD) has biased composition (low complexity). Residues 269–282 (SSINRSSTDTTSRW) show a composition bias toward polar residues. 2 stretches are compositionally biased toward basic and acidic residues: residues 285–295 (RRRDYEERKEA) and 410–455 (EKEK…EKLE). Positions 340–459 (QSYTDNQVNL…EKEKLEGTLG (120 aa)) form a coiled coil. The Protein kinase domain occupies 480–745 (FSEELKIGMG…DLKDQILPAL (266 aa)). ATP-binding positions include 486-494 (IGMGAYGAV) and lysine 507. Catalysis depends on aspartate 602, which acts as the Proton acceptor. Residues 765–835 (QPPTHFICPL…TAIMEWRSTR (71 aa)) form the U-box domain.

It belongs to the protein kinase superfamily. Ser/Thr protein kinase family.

The enzyme catalyses L-seryl-[protein] + ATP = O-phospho-L-seryl-[protein] + ADP + H(+). It catalyses the reaction L-threonyl-[protein] + ATP = O-phospho-L-threonyl-[protein] + ADP + H(+). The catalysed reaction is S-ubiquitinyl-[E2 ubiquitin-conjugating enzyme]-L-cysteine + [acceptor protein]-L-lysine = [E2 ubiquitin-conjugating enzyme]-L-cysteine + N(6)-ubiquitinyl-[acceptor protein]-L-lysine.. The protein operates within protein modification; protein ubiquitination. Functionally, functions as an E3 ubiquitin ligase. In Arabidopsis thaliana (Mouse-ear cress), this protein is U-box domain-containing protein 35 (PUB35).